The sequence spans 856 residues: DNA endonuclease RBBP8 (856 aa).

The segment at 25 to 48 (ELWSKLKECHDKDLQELLMKIGKL) is essential for binding to the MRN complex and for RPA focus formation on DNA damage. Coiled coils occupy residues 38-87 (LQEL…EDRL) and 120-141 (ITEL…SEQL). Disordered regions lie at residues 143–174 (DMQK…DSPL) and 423–456 (DSEQ…DKEN). Residues 156-168 (ENPADTGDGEDGV) are compositionally biased toward acidic residues. The interval 493 to 515 (SSSRTKLTISLVPEKPDTKTILH) is damage-recruitment motif. Residues 695 to 732 (SPSQSISCKERSDIPSIENKKITSEKEHESKGEPYQKQ) are disordered. A compositionally biased stretch (basic and acidic residues) spans 702 to 730 (CKERSDIPSIENKKITSEKEHESKGEPYQ). Phosphothreonine is present on T806. Position 818 is a phosphothreonine; by ATR (T818).

It belongs to the COM1/SAE2/CtIP family. As to quaternary structure, homotetramer; formed by antiparallel association of helical extensions protruding from the N-termini of two parallel coiled-coil dimers. Interacts with the MRN complex; the interaction links DNA sensing to resection. Interacts with samhd1. Post-translationally, phosphorylation at Thr-818 by atr promotes recruitment to double-strand breaks (DSBs).

Its subcellular location is the nucleus. It localises to the chromosome. In terms of biological role, endonuclease that cooperates with the MRE11-RAD50-NBN (MRN) complex in DNA-end resection, the first step of double-strand break (DSB) repair through the homologous recombination (HR) pathway. Functions downstream of the MRN complex and ATM, promotes ATR activation and its recruitment to DSBs in the S/G2 phase facilitating the generation of ssDNA. Specifically promotes the endonuclease activity of the MRN complex to clear DNA ends containing protein adducts: recruited to DSBs by nbn following phosphorylation, and promotes the endonuclease of mre11 to clear protein-DNA adducts and generate clean double-strand break ends. The MRN complex and rbbp8/CtIP are also required for chromosome alignment during metaphase. The chain is DNA endonuclease RBBP8 (rbbp8) from Xenopus laevis (African clawed frog).